A 172-amino-acid polypeptide reads, in one-letter code: MSASIRDAGVADLPGILAIYNDAVGNTTAIWNETPVDLANRQAWFDARARQGYPILVASDAAGEVLGYASYGDWRPFEGFRGTVEHSVYVRDDQRGKGLGVQLLQALIERARAQGLHVMVAAIESGNAASIGLHRRLGFEISGQMPQVGQKFGRWLDLTFMQLNLDPTRSAP.

The region spanning 3–166 (ASIRDAGVAD…DLTFMQLNLD (164 aa)) is the N-acetyltransferase domain. Residues 75–77 (RPF) and 85–87 (EHS) contribute to the substrate site. Acetyl-CoA contacts are provided by residues 88-90 (VYV), 96-101 (GKGLGV), and Asn-127.

As to quaternary structure, homodimer.

It carries out the reaction L-methionine sulfoximine + acetyl-CoA = N-acetyl-L-methionine sulfoximine + CoA + H(+). The enzyme catalyses L-methionine sulfone + acetyl-CoA = N-acetyl-L-methionine sulfone + CoA + H(+). Functionally, plays a role in the resistance against the toxic effects of L-methionine sulfoximine (MSX), a rare amino acid, which inhibits glutamine synthetase (GlnA). Catalyzes the acetylation of L-methionine sulfoximine (MSX). It can also use L-methionine sulfone (MSO). This Pseudomonas paraeruginosa (strain DSM 24068 / PA7) (Pseudomonas aeruginosa (strain PA7)) protein is L-methionine sulfoximine/L-methionine sulfone acetyltransferase.